A 743-amino-acid polypeptide reads, in one-letter code: Dolichyl-phosphooligosaccharide-protein glycotransferase 2 (743 aa).

At 1–7 (MKIDKRL) the chain is on the cytoplasmic side. A helical membrane pass occupies residues 8–28 (MVIVAIATLFRMIPFRLKYLV). The short motif at 29–31 (GSD) is the DXD motif 1 element. Residues 29 to 91 (GSDPYFHLAY…FSFLGISLYT (63 aa)) are Extracellular-facing. Aspartate 31 contacts Mn(2+). The chain crosses the membrane as a helical span at residues 92–112 (AFRVTPVIFGVLTVVFFYLSL). The Cytoplasmic portion of the chain corresponds to 113-119 (KKLYNRD). A helical transmembrane segment spans residues 120 to 140 (VAFIVGLFLGVNYGHIFRSMA). Residues 141–144 (NYYR) are Extracellular-facing. Residues arginine 144 and aspartate 146 each coordinate Mn(2+). The DXD motif 2 signature appears at 144 to 146 (RGD). Residues 145–165 (GDNYMLFWYSVALLGIALGLK) traverse the membrane as a helical segment. At 166–170 (TRSKY) the chain is on the cytoplasmic side. 2 helical membrane-spanning segments follow: residues 171–191 (RYLFYLLPGIATGFASAFWQA) and 192–212 (YYPIFVFVLAGGLLLGVYAYL). The Cytoplasmic portion of the chain corresponds to 213–216 (KSPK). Residues 217–237 (LFLDSILIVLSTGLGVLIANI) traverse the membrane as a helical segment. The Extracellular segment spans residues 238–272 (LGDKVGYGMLGYTDWMGKKVAETFGLEFGFIKDAY). A helical transmembrane segment spans residues 273 to 293 (LLIHVKYLLPLSLVFLGFLII). Residues 294 to 302 (TKKLNPKIK) lie on the Cytoplasmic side of the membrane. The helical transmembrane segment at 303–323 (VGVLVGGSILAFIVMLVKFPA) threads the bilayer. Topologically, residues 324 to 345 (LKDLSTGFGTFREVPISETLPP) are extracellular. Positions 333–336 (TFRE) match the TIXE motif motif. A helical membrane pass occupies residues 346–366 (TLDDLWRAYNIAIFLAALYIL). The Cytoplasmic segment spans residues 367 to 373 (RLRKIRS). The chain crosses the membrane as a helical span at residues 374 to 391 (GDAILLGYVITSLWMLRY). Topologically, residues 392–394 (WTR) are extracellular. Arginine 394 provides a ligand contact to a glycophospholipid. Residues 395–415 (FLFTAAPAVAFLSGIGVYELT) traverse the membrane as a helical segment. Over 416-424 (RRIKENKIR) the chain is Cytoplasmic. The helical transmembrane segment at 425-445 (ITSLGVVILLSSAFSLGEVYS) threads the bilayer. At 446-743 (VKPFMNENWE…LDRGIVRVKN (298 aa)) the chain is on the extracellular side. The segment at 474 to 476 (WWD) is interacts with target acceptor peptide in protein substrate. The WWDYG motif signature appears at 474–478 (WWDWG). The DK motif signature appears at 526–533 (DILKFEAI).

It belongs to the STT3 family. It depends on Mn(2+) as a cofactor. Mg(2+) is required as a cofactor.

The protein localises to the cell membrane. It catalyses the reaction an archaeal dolichyl phosphooligosaccharide + [protein]-L-asparagine = an archaeal dolichyl phosphate + a glycoprotein with the oligosaccharide chain attached by N-beta-D-glycosyl linkage to a protein L-asparagine.. It participates in protein modification; protein glycosylation. Functionally, oligosaccharyl transferase (OST) that catalyzes the initial transfer of a defined glycan (ManNAcXyl(2)GlcAMan(2)GalNAc in P.furiosus) from the lipid carrier dolichol-monophosphate to an asparagine residue within an Asn-X-Ser/Thr consensus motif in nascent polypeptide chains, the first step in protein N-glycosylation. The protein is Dolichyl-phosphooligosaccharide-protein glycotransferase 2 (aglB2) of Pyrococcus furiosus (strain ATCC 43587 / DSM 3638 / JCM 8422 / Vc1).